The chain runs to 275 residues: Putative rhamnulose-1-phosphate aldolase (275 aa).

The active site involves Glu117. Residues His141, His143, and His212 each coordinate Zn(2+).

It belongs to the aldolase class II family. RhaD subfamily. In terms of assembly, homotetramer. It depends on Zn(2+) as a cofactor.

The protein localises to the cytoplasm. It catalyses the reaction L-rhamnulose 1-phosphate = (S)-lactaldehyde + dihydroxyacetone phosphate. It functions in the pathway carbohydrate degradation; L-rhamnose degradation; glycerone phosphate from L-rhamnose: step 3/3. In terms of biological role, catalyzes the reversible cleavage of L-rhamnulose-1-phosphate to dihydroxyacetone phosphate (DHAP) and L-lactaldehyde. The sequence is that of Putative rhamnulose-1-phosphate aldolase from Salmonella typhi.